A 260-amino-acid chain; its full sequence is Protein phosphatase 1 regulatory subunit 35 (260 aa).

The interval 1-100 (MMGFGASALE…PLLVAGAPGD (100 aa)) is disordered. Residues Ser-46 and Ser-53 each carry the phosphoserine modification. Residues 64–76 (RKGRRGGSRRGRQ) show a composition bias toward basic residues.

It belongs to the PPP1R35 family. As to quaternary structure, interacts with PPP1CA; this interaction mediates the PPP1CA phosphatase activity inhibition. Interacts with RTTN; this interaction allows the mutual recruitment to the centriole.

Its subcellular location is the cytoplasm. It is found in the cytoskeleton. The protein resides in the microtubule organizing center. It localises to the centrosome. The protein localises to the centriole. In terms of biological role, during centriole duplication, plays a role in the centriole elongation by promoting the recruitment of the microtubule-binding elongation machinery through its interaction with TTTN, leading to the centriole to centrosome conversion. In addition may play a role in the primary cilia assembly. In Mus musculus (Mouse), this protein is Protein phosphatase 1 regulatory subunit 35.